Here is a 494-residue protein sequence, read N- to C-terminus: Poly(3-hydroxybutyrate) depolymerase (494 aa).

An N-terminal signal peptide occupies residues 1–25 (MAFNFIRAAAAGAAMALCGVGSVHA). Serine 45 functions as the Nucleophile in the catalytic mechanism. Catalysis depends on charge relay system residues aspartate 132 and histidine 166. One can recognise a Fibronectin type-III domain in the interval 347-431 (APTGVSTSGA…AAASGTTLAA (85 aa)).

Belongs to the AB hydrolase superfamily. Lipase family.

Its subcellular location is the secreted. The catalysed reaction is [(3R)-hydroxybutanoate](n) + H2O = [(3R)-hydroxybutanoate](n-2) + (3R)-hydroxybutanoate dimer + H(+). It catalyses the reaction [(3R)-hydroxybutanoate](n) + H2O = [(3R)-hydroxybutanoate](n-1) + (R)-3-hydroxybutanoate + H(+). It carries out the reaction (3R)-hydroxybutanoate dimer + H2O = 2 (R)-3-hydroxybutanoate + H(+). Catalyzes the hydrolysis of poly(3-hydroxybutyrate) (PHB) film, producing the monomer and dimer of 3-hydroxybutyrate (3HB), while the 3HB trimer and tetramer are not formed. This Delftia acidovorans (Pseudomonas acidovorans) protein is Poly(3-hydroxybutyrate) depolymerase.